The sequence spans 493 residues: Probable cytosol aminopeptidase (493 aa).

K265 and D270 together coordinate Mn(2+). K277 is an active-site residue. Mn(2+) contacts are provided by D288, D347, and E349. R351 is an active-site residue.

It belongs to the peptidase M17 family. Mn(2+) is required as a cofactor.

Its subcellular location is the cytoplasm. It catalyses the reaction Release of an N-terminal amino acid, Xaa-|-Yaa-, in which Xaa is preferably Leu, but may be other amino acids including Pro although not Arg or Lys, and Yaa may be Pro. Amino acid amides and methyl esters are also readily hydrolyzed, but rates on arylamides are exceedingly low.. The enzyme catalyses Release of an N-terminal amino acid, preferentially leucine, but not glutamic or aspartic acids.. Its function is as follows. Presumably involved in the processing and regular turnover of intracellular proteins. Catalyzes the removal of unsubstituted N-terminal amino acids from various peptides. This Hydrogenovibrio crunogenus (strain DSM 25203 / XCL-2) (Thiomicrospira crunogena) protein is Probable cytosol aminopeptidase.